Reading from the N-terminus, the 536-residue chain is 3',5'-cyclic-AMP phosphodiesterase 4C (536 aa).

A disordered region spans residues 49–69 (QALLGTPPQSSQQAAPAEESG). Residues 178–507 (VQTDQEEQLA…EWYQSRVPCS (330 aa)) enclose the PDEase domain. Catalysis depends on histidine 254, which acts as the Proton donor. Histidine 254 contributes to the 3',5'-cyclic AMP binding site. Residues histidine 254 and histidine 258 each coordinate AMP. The Zn(2+) site is built by histidine 258, histidine 294, aspartate 295, and aspartate 412. Positions 295, 412, 463, and 466 each coordinate AMP. Aspartate 295 lines the Mg(2+) pocket. Aspartate 295 serves as a coordination point for Mn(2+). 3',5'-cyclic AMP-binding residues include glutamine 463 and phenylalanine 466. Serine 507 is subject to Phosphoserine.

Belongs to the cyclic nucleotide phosphodiesterase family. PDE4 subfamily. Part of a complex containing AKAP5, ADCY5, ADCY6 and PKD2. It depends on Zn(2+) as a cofactor. Mg(2+) serves as cofactor. Requires Mn(2+) as cofactor.

It localises to the cell projection. The protein localises to the cilium. The enzyme catalyses 3',5'-cyclic AMP + H2O = AMP + H(+). It functions in the pathway purine metabolism; 3',5'-cyclic AMP degradation; AMP from 3',5'-cyclic AMP: step 1/1. Hydrolyzes the second messenger cAMP, which is a key regulator of many important physiological processes. This Rattus norvegicus (Rat) protein is 3',5'-cyclic-AMP phosphodiesterase 4C.